The primary structure comprises 448 residues: MSDNVPTIAAVATAPGRGGVGVIRISGKNLLPMAEALCGKTPKPRVATYADFTDADGQAIDSGLLLFFAAPASFTGEDVIELQGHGGPVVMDMLLNRCLELGARLAEPGEFTKRAFLNDKLDLAQAEGVADLIDASSRSAARLALRSLKGDFSRRIHGLVEDLITLRMLVEATLDFPEEDIDFLEAADARGKLDGLRRAVDDVLANAQQGAILREGLNVVLVGAPNVGKSSLLNALAGDEVAIVTDIAGTTRDAVRERILIDGVPVHIVDTAGLRETDDVVERIGIERSRKAVSEADVALVLVDPREGVNDKTRAILDALPPELKRIEIHSKSDLHAHAAGGFGTGAETVIALSAKTGDGLDALKRTLLREAGWQGEGEGLFLARTRHVNALKAAQEELSLAALCGNHQIELFAEHLRLAQVACGEITGEFTADDLLGVIFSRFCIGK.

Arg24, Glu81, and Lys120 together coordinate (6S)-5-formyl-5,6,7,8-tetrahydrofolate. The TrmE-type G domain occupies 216–373 (GLNVVLVGAP…LKRTLLREAG (158 aa)). Asn226 contacts K(+). GTP is bound by residues 226–231 (NVGKSS), 245–251 (TDIAGTT), and 270–273 (DTAG). Residue Ser230 participates in Mg(2+) binding. Residues Thr245, Ile247, and Thr250 each contribute to the K(+) site. Thr251 serves as a coordination point for Mg(2+). Lys448 lines the (6S)-5-formyl-5,6,7,8-tetrahydrofolate pocket.

Belongs to the TRAFAC class TrmE-Era-EngA-EngB-Septin-like GTPase superfamily. TrmE GTPase family. In terms of assembly, homodimer. Heterotetramer of two MnmE and two MnmG subunits. It depends on K(+) as a cofactor.

The protein resides in the cytoplasm. Functionally, exhibits a very high intrinsic GTPase hydrolysis rate. Involved in the addition of a carboxymethylaminomethyl (cmnm) group at the wobble position (U34) of certain tRNAs, forming tRNA-cmnm(5)s(2)U34. The chain is tRNA modification GTPase MnmE from Neisseria meningitidis serogroup C / serotype 2a (strain ATCC 700532 / DSM 15464 / FAM18).